Reading from the N-terminus, the 32-residue chain is Basic phospholipase A2 (32 aa).

Ca(2+) contacts are provided by Y26, G28, and G30.

Belongs to the phospholipase A2 family. Group II subfamily. It depends on Ca(2+) as a cofactor. As to expression, expressed by the venom gland.

It localises to the secreted. It catalyses the reaction a 1,2-diacyl-sn-glycero-3-phosphocholine + H2O = a 1-acyl-sn-glycero-3-phosphocholine + a fatty acid + H(+). Functionally, snake venom phospholipase A2 (PLA2) that inhibits neuromuscular transmission by blocking acetylcholine release from the nerve termini. PLA2 catalyzes the calcium-dependent hydrolysis of the 2-acyl groups in 3-sn-phosphoglycerides. The protein is Basic phospholipase A2 of Gloydius halys (Chinese water mocassin).